The primary structure comprises 694 residues: Acetyl-coenzyme A synthetase (694 aa).

The disordered stretch occupies residues 1–23 (MSDKRPRSPCSNNNDELNDSSVL). Polar residues predominate over residues 9-23 (PCSNNNDELNDSSVL). CoA-binding positions include 229-232 (RGKK) and Thr-347. Residues 423–425 (GEP), 447–452 (DTYWQT), Asp-536, and Arg-551 each bind ATP. Residue Ser-559 coordinates CoA. Arg-562 lines the ATP pocket. Arg-628 provides a ligand contact to CoA.

It belongs to the ATP-dependent AMP-binding enzyme family.

It carries out the reaction acetate + ATP + CoA = acetyl-CoA + AMP + diphosphate. The sequence is that of Acetyl-coenzyme A synthetase (ACS) from Cryptosporidium parvum.